The primary structure comprises 1997 residues: Chromatin-remodeling ATPase INO80 (1997 aa).

3 disordered regions span residues 1-378 (MDHF…AAPS), 397-579 (IAAP…AENE), and 674-858 (ERKK…EKVV). Basic and acidic residues predominate over residues 12–25 (PHFDEDGTEGRGDR). Residues 32–41 (GPAPPPPPPR) are compositionally biased toward pro residues. Low complexity predominate over residues 49 to 64 (NPVSSNSAVQSQAAAA). Positions 89–107 (STNSMRATPHSSSSFNLRS) are enriched in polar residues. Residues 108–117 (PTREPSEYRH) show a composition bias toward basic and acidic residues. 3 stretches are compositionally biased toward low complexity: residues 118–156 (PLSS…SLSS), 203–230 (SLQA…PLSA), and 240–251 (SSSSQPPARASQ). A compositionally biased stretch (basic and acidic residues) spans 264-276 (SFRDRDSSVREKS). A compositionally biased stretch (polar residues) spans 288-297 (EASNGISGSS). The segment covering 298–317 (PRKDRDRDRDHRGTTRESQR) has biased composition (basic and acidic residues). Composition is skewed to polar residues over residues 318–340 (RSVS…SASN) and 366–378 (VDNT…AAPS). Residues 411 to 420 (SPRLSLRPPS) are compositionally biased toward low complexity. Composition is skewed to polar residues over residues 433–442 (NPTNGTTSTA), 451–465 (SPPS…TNPS), and 472–481 (SFSNILSSSE). 2 stretches are compositionally biased toward basic and acidic residues: residues 500–519 (VPMK…EKKE) and 529–540 (RISDIRHSESTP). Residues 666 to 735 (ERELFAEKER…VQQTRLILQK (70 aa)) are a coiled coil. The segment covering 689–707 (MATTMEAKAAALARASAAQ) has biased composition (low complexity). The span at 709–723 (EAERQKYMREAERAN) shows a compositional bias: basic and acidic residues. A compositionally biased stretch (basic residues) spans 769–781 (TKGKGRAGARPKK). The segment covering 782–793 (SKEQKQAEKDAA) has biased composition (basic and acidic residues). The span at 794–806 (EAAQAALDAGLEL) shows a compositional bias: low complexity. The span at 824 to 858 (APKEADVDKDKENKEPQEPKEPKEPKEKVIKEKVV) shows a compositional bias: basic and acidic residues. Residues 881 to 1006 (IWRDLARKDV…SHFIGKKIKT (126 aa)) form the DBINO domain. The region spanning 1130-1302 (VNLYEQGING…WALLHFIMPS (173 aa)) is the Helicase ATP-binding domain. 1143–1150 (DEMGLGKT) provides a ligand contact to ATP. A DEAQ box motif is present at residues 1253-1256 (DEAQ). The region spanning 1702–1858 (KLDELLRELK…GSSAAGGGVD (157 aa)) is the Helicase C-terminal domain. Basic and acidic residues predominate over residues 1891-1902 (ELLESGELDKMQ). Positions 1891-1986 (ELLESGELDK…GSKKAKTTKQ (96 aa)) are disordered. A compositionally biased stretch (basic residues) spans 1903–1914 (KKSRGGNKRKRG). The segment covering 1919-1933 (EGKEVSLDEMYHEGE) has biased composition (basic and acidic residues). Gly residues predominate over residues 1954–1967 (AAGGEGGDGKGAVG). Residues 1970–1985 (AKKRKTGGSKKAKTTK) are compositionally biased toward basic residues.

This sequence belongs to the SNF2/RAD54 helicase family. In terms of assembly, component of the INO80 chromatin-remodeling complex.

It localises to the nucleus. The catalysed reaction is ATP + H2O = ADP + phosphate + H(+). Its function is as follows. ATPase component of the INO80 complex which remodels chromatin by shifting nucleosomes and is involved in DNA repair. The sequence is that of Chromatin-remodeling ATPase INO80 (crf2-1) from Neurospora crassa (strain ATCC 24698 / 74-OR23-1A / CBS 708.71 / DSM 1257 / FGSC 987).